Reading from the N-terminus, the 104-residue chain is Large ribosomal subunit protein bL21 (104 aa).

Belongs to the bacterial ribosomal protein bL21 family. In terms of assembly, part of the 50S ribosomal subunit. Contacts protein L20.

Its function is as follows. This protein binds to 23S rRNA in the presence of protein L20. This Helicobacter pylori (strain HPAG1) protein is Large ribosomal subunit protein bL21.